The sequence spans 356 residues: tRNA-specific 2-thiouridylase MnmA 1 (356 aa).

ATP is bound by residues 8-15 and M34; that span reads GMSGGVDS. Catalysis depends on C103, which acts as the Nucleophile. An intrachain disulfide couples C103 to C199. G127 provides a ligand contact to ATP. Residues 149 to 151 form an interaction with tRNA region; sequence KDQ. C199 functions as the Cysteine persulfide intermediate in the catalytic mechanism. The segment at 305 to 306 is interaction with tRNA; the sequence is RY.

It belongs to the MnmA/TRMU family.

The protein localises to the cytoplasm. It carries out the reaction S-sulfanyl-L-cysteinyl-[protein] + uridine(34) in tRNA + AH2 + ATP = 2-thiouridine(34) in tRNA + L-cysteinyl-[protein] + A + AMP + diphosphate + H(+). Its function is as follows. Catalyzes the 2-thiolation of uridine at the wobble position (U34) of tRNA, leading to the formation of s(2)U34. This Clostridium botulinum (strain Langeland / NCTC 10281 / Type F) protein is tRNA-specific 2-thiouridylase MnmA 1.